A 566-amino-acid polypeptide reads, in one-letter code: Malate synthase, glyoxysomal (566 aa).

Arginine 182 acts as the Proton acceptor in catalysis. Catalysis depends on aspartate 467, which acts as the Proton donor. Positions 564–566 match the Microbody targeting signal motif; the sequence is SRL.

This sequence belongs to the malate synthase family.

It localises to the glyoxysome. It carries out the reaction glyoxylate + acetyl-CoA + H2O = (S)-malate + CoA + H(+). It functions in the pathway carbohydrate metabolism; glyoxylate cycle; (S)-malate from isocitrate: step 2/2. The protein is Malate synthase, glyoxysomal of Cucurbita maxima (Pumpkin).